We begin with the raw amino-acid sequence, 396 residues long: L-lactate dehydrogenase (396 aa).

The 380-residue stretch at 1–380 (MIISAASDYR…TQDSLVQGLG (380 aa)) folds into the FMN hydroxy acid dehydrogenase domain. Tyr24 serves as a coordination point for substrate. FMN contacts are provided by Ser106 and Gln127. Residue Tyr129 coordinates substrate. Position 155 (Thr155) interacts with FMN. Arg164 is a substrate binding site. Lys251 serves as a coordination point for FMN. The active-site Proton acceptor is the His275. Residue Arg278 coordinates substrate. Residue 306 to 330 (DSGIRNGLDVVRMIALGADTVLLGR) participates in FMN binding.

The protein belongs to the FMN-dependent alpha-hydroxy acid dehydrogenase family. FMN is required as a cofactor.

The protein localises to the cell inner membrane. It catalyses the reaction (S)-lactate + A = pyruvate + AH2. In terms of biological role, catalyzes the conversion of L-lactate to pyruvate. Is coupled to the respiratory chain. The chain is L-lactate dehydrogenase from Escherichia coli O127:H6 (strain E2348/69 / EPEC).